Reading from the N-terminus, the 350-residue chain is MIQKMALDEFDSLGDKVIEGYQLTDNDLRTLLSLESKEGLERLYSAARKVRDHYFGNRVFLNCFIYFSTYCKNQCSFCYYNCRNEINRYRLTMEEIKETCKTLKGAGFHMVDLTMGEDPYYYEDPNRFVELVQIVKEELGLPIMISPGLMDNATLLKAREKGANFLALYQETYDTELYRKLRVGQSFDGRVNARRFAKQQGYCVEDGILTGVGNDIESTILSLRGMSTNDPDMVRVMTFLPQEGTPLEGFRDKSNLSELKIISVLRLMFPKRLIPASLDLEGIDGMVLRLNAGANIVTSILPPDSQLEGVANYDRDLEERDRDIKSVVRRLEIMGMKPARQADFEAVLGC.

The region spanning asparagine 57–aspartate 279 is the Radical SAM core domain. Residues cysteine 71 and cysteine 75 each contribute to the [4Fe-4S] cluster site. Residue phenylalanine 77 participates in S-adenosyl-L-methionine binding. [4Fe-4S] cluster is bound at residue cysteine 78. (3R)-3-methyl-D-ornithine is bound by residues aspartate 112, serine 146, and tyrosine 169. S-adenosyl-L-methionine contacts are provided by glutamate 171, arginine 182, and arginine 190. Residue arginine 235 participates in (3R)-3-methyl-D-ornithine binding. 2 residues coordinate S-adenosyl-L-methionine: leucine 240 and glutamine 242. Positions 277, 298, and 299 each coordinate (3R)-3-methyl-D-ornithine.

The protein belongs to the radical SAM superfamily. PylB family. It depends on [4Fe-4S] cluster as a cofactor. S-adenosyl-L-methionine is required as a cofactor.

The enzyme catalyses L-lysine = (3R)-3-methyl-D-ornithine. Its pathway is amino-acid biosynthesis; L-pyrrolysine biosynthesis. Catalyzes the isomerization of L-lysine to (3R)-3-methyl-D-ornithine via a radical-based mechanism, a step in the biosynthesis pathway of pyrrolysine. Also catalyzes the reverse reaction in vitro, converting (3R)-3-methyl-D-ornithine into L-lysine. The chain is 3-methylornithine synthase from Methanosarcina barkeri (strain Fusaro / DSM 804).